Reading from the N-terminus, the 420-residue chain is 2,3-dimethylmalate dehydratase large subunit (420 aa).

The [4Fe-4S] cluster site is built by Cys-301, Cys-361, and Cys-364.

Belongs to the aconitase/IPM isomerase family. LeuC type 2 subfamily. Heterodimer of a large and a small subunit. The cofactor is [4Fe-4S] cluster.

The enzyme catalyses (2R,3S)-2,3-dimethylmalate = dimethylmaleate + H2O. The protein operates within cofactor degradation; nicotinate degradation; propanoate and pyruvate from 6-hydroxynicotinate: step 7/8. The protein is 2,3-dimethylmalate dehydratase large subunit (dmdA) of Eubacterium barkeri (Clostridium barkeri).